A 251-amino-acid polypeptide reads, in one-letter code: ATP synthase subunit a (251 aa).

7 helical membrane-spanning segments follow: residues 29–49 (FTQSALYMFAAVGIIALITLV), 56–73 (LVPGRMQSLAEAFYEFIA), 87–107 (FVPLVFSLFMFVLVLNLFGMI), 117–137 (IIVTFMLALVVILTVVIYGFM), 159–181 (LIVAIEVVSFISRPISLSVRLFA), 192–212 (IFAGFVPALLAAGIWGILSPL), and 218–238 (VAITALEMLVAVLQAYVFATL).

It belongs to the ATPase A chain family. F-type ATPases have 2 components, CF(1) - the catalytic core - and CF(0) - the membrane proton channel. CF(1) has five subunits: alpha(3), beta(3), gamma(1), delta(1), epsilon(1). CF(0) has three main subunits: a(1), b(2) and c(9-12). The alpha and beta chains form an alternating ring which encloses part of the gamma chain. CF(1) is attached to CF(0) by a central stalk formed by the gamma and epsilon chains, while a peripheral stalk is formed by the delta and b chains.

The protein resides in the cell inner membrane. In terms of biological role, key component of the proton channel; it plays a direct role in the translocation of protons across the membrane. In Methylobacterium sp. (strain 4-46), this protein is ATP synthase subunit a.